Here is a 190-residue protein sequence, read N- to C-terminus: Surfactant protein C (190 aa).

A propeptide spanning residues methionine 1 to leucine 24 is cleaved from the precursor. S-palmitoyl cysteine attachment occurs at residues cysteine 28 and cysteine 29. Residues histidine 59–threonine 190 constitute a propeptide that is removed on maturation. Residues phenylalanine 94–threonine 190 form the BRICHOS domain. An intrachain disulfide couples cysteine 121 to cysteine 182.

Its subcellular location is the secreted. It is found in the extracellular space. The protein localises to the surface film. In terms of biological role, pulmonary surfactant associated proteins promote alveolar stability by lowering the surface tension at the air-liquid interface in the peripheral air spaces. The sequence is that of Surfactant protein C (SFTPC) from Bos taurus (Bovine).